An 81-amino-acid polypeptide reads, in one-letter code: Cortexin-2 (81 aa).

A helical membrane pass occupies residues 29–49 (TGFAFVGILCIFLGLLIIRCF).

This sequence belongs to the cortexin family.

Its subcellular location is the membrane. The protein is Cortexin-2 (Ctxn2) of Mus musculus (Mouse).